A 1428-amino-acid chain; its full sequence is DNA polymerase III PolC-type (1428 aa).

One can recognise an Exonuclease domain in the interval 414–570 (FVVFDVETTG…YDAEATGYLL (157 aa)).

It belongs to the DNA polymerase type-C family. PolC subfamily.

The protein resides in the cytoplasm. The catalysed reaction is DNA(n) + a 2'-deoxyribonucleoside 5'-triphosphate = DNA(n+1) + diphosphate. In terms of biological role, required for replicative DNA synthesis. This DNA polymerase also exhibits 3' to 5' exonuclease activity. The protein is DNA polymerase III PolC-type of Oceanobacillus iheyensis (strain DSM 14371 / CIP 107618 / JCM 11309 / KCTC 3954 / HTE831).